Reading from the N-terminus, the 254-residue chain is PSME3-interacting protein (254 aa).

At Met-1 the chain carries N-acetylmethionine. Phosphoserine is present on Ser-17. Residues 22–39 (DERRKRRQEEWEKVRKPE) show a composition bias toward basic and acidic residues. The tract at residues 22–52 (DERRKRRQEEWEKVRKPEDPEECPEEVYDPR) is disordered. Lys-139 is modified (N6-acetyllysine). The segment at 155-195 (GAVKHKSSESGNSVKRLKPDPEPDDKNQEPSSCKSLGNTSL) is disordered. Positions 171–182 (LKPDPEPDDKNQ) are enriched in basic and acidic residues. Residues 183 to 195 (EPSSCKSLGNTSL) show a composition bias toward polar residues. The interaction with PSME3 stretch occupies residues 201–254 (HCPSAAVCIGILPGLGAYSGSSDSESSSDSEGTINATGKIVSSIFRTNTFLEAP). A phosphoserine; by CK2 mark is found at Ser-222 and Ser-228.

Interacts (via C-terminus) with both free and 20S proteasome-bound forms of the proteasome activator complex subunit PSME3; the interaction is direct. In terms of processing, phosphorylation by CK2 stabilizes the interaction with PSME3.

It is found in the nucleus. In terms of biological role, promotes the association of the proteasome activator complex subunit PSME3 with the 20S proteasome and regulates its activity. Inhibits PSME3-mediated degradation of some proteasome substrates, probably by affecting their diffusion rate into the catalytic chamber of the proteasome. Also inhibits the interaction of PSME3 with COIL, inhibits accumulation of PSME3 in Cajal bodies and positively regulates the number of Cajal bodies in the nucleus. This is PSME3-interacting protein from Homo sapiens (Human).